The chain runs to 287 residues: GTPase Era (287 aa).

In terms of domain architecture, Era-type G spans Phe-6–Lys-178. Positions Gly-14 to Ser-21 are G1. Residue Gly-14–Ser-21 coordinates GTP. Positions His-40–Ser-44 are G2. Residues Asp-62 to Gly-65 form a G3 region. GTP is bound by residues Asp-62–Ile-66 and Asn-124–Asp-127. Positions Asn-124–Asp-127 are G4. The segment at Ile-154 to Gly-156 is G5. Residues Leu-207 to Lys-282 enclose the KH type-2 domain.

It belongs to the TRAFAC class TrmE-Era-EngA-EngB-Septin-like GTPase superfamily. Era GTPase family. As to quaternary structure, monomer.

The protein localises to the cytoplasm. It localises to the cell membrane. In terms of biological role, an essential GTPase that binds both GDP and GTP, with rapid nucleotide exchange. Plays a role in 16S rRNA processing and 30S ribosomal subunit biogenesis and possibly also in cell cycle regulation and energy metabolism. The protein is GTPase Era of Buchnera aphidicola subsp. Baizongia pistaciae (strain Bp).